The chain runs to 181 residues: ATP-dependent protease subunit HslV (181 aa).

The active site involves T9. Na(+) is bound by residues A166, C169, and T172.

The protein belongs to the peptidase T1B family. HslV subfamily. As to quaternary structure, a double ring-shaped homohexamer of HslV is capped on each side by a ring-shaped HslU homohexamer. The assembly of the HslU/HslV complex is dependent on binding of ATP.

The protein resides in the cytoplasm. The enzyme catalyses ATP-dependent cleavage of peptide bonds with broad specificity.. Its activity is regulated as follows. Allosterically activated by HslU binding. Functionally, protease subunit of a proteasome-like degradation complex believed to be a general protein degrading machinery. The sequence is that of ATP-dependent protease subunit HslV from Staphylococcus aureus (strain bovine RF122 / ET3-1).